The following is a 490-amino-acid chain: NAD/NADP-dependent betaine aldehyde dehydrogenase (490 aa).

Thr26, Ile27, and Asp93 together coordinate K(+). 150 to 153 lines the NADPH pocket; sequence GAWN. Lys162 acts as the Charge relay system in catalysis. Position 176–179 (176–179) interacts with NADPH; that stretch reads KPSE. Residue Val180 participates in K(+) binding. NADPH-binding positions include Gly209 and 230–233; that span reads GTST. K(+) is bound at residue Leu246. Glu252 acts as the Proton acceptor in catalysis. NADPH contacts are provided by Cys286 and Glu387. Cys286 acts as the Nucleophile in catalysis. Cys286 is modified (cysteine sulfenic acid (-SOH)). K(+) contacts are provided by Lys457 and Gly460. The active-site Charge relay system is Glu464.

It belongs to the aldehyde dehydrogenase family. As to quaternary structure, dimer of dimers. Requires K(+) as cofactor.

It carries out the reaction betaine aldehyde + NAD(+) + H2O = glycine betaine + NADH + 2 H(+). The catalysed reaction is betaine aldehyde + NADP(+) + H2O = glycine betaine + NADPH + 2 H(+). It functions in the pathway amine and polyamine biosynthesis; betaine biosynthesis via choline pathway; betaine from betaine aldehyde: step 1/1. Involved in the biosynthesis of the osmoprotectant glycine betaine. Catalyzes the irreversible oxidation of betaine aldehyde to the corresponding acid. In P.aeruginosa this reaction is a compulsory step in the assimilation of carbon and nitrogen when bacteria are growing in choline or choline precursors. Can use NADP(+) with similar efficiency to NAD(+), a property that can be used by the bacterium to produce the NADPH needed to combat the oxidative stress imposed by the host defenses. This Pseudomonas aeruginosa (strain ATCC 15692 / DSM 22644 / CIP 104116 / JCM 14847 / LMG 12228 / 1C / PRS 101 / PAO1) protein is NAD/NADP-dependent betaine aldehyde dehydrogenase.